Reading from the N-terminus, the 775-residue chain is ATP-dependent 6-phosphofructokinase 2 (775 aa).

An N-terminal catalytic PFK domain 1 region spans residues 1–390; that stretch reads MTNTILDTYS…YHSAYRHLNT (390 aa). ATP contacts are provided by residues Gly-25, 88–89, and 118–121; these read RC and GDGS. Residue Asp-119 coordinates Mg(2+). Substrate contacts are provided by residues 164 to 166, Arg-201, 208 to 210, Glu-264, Arg-292, and 298 to 301; these read SID, MGR, and HIQR. Asp-166 functions as the Proton acceptor in the catalytic mechanism. Residues 391-404 are interdomain linker; sequence SDHPKMVLPEDKRM. Residues 405–775 are C-terminal regulatory PFK domain 2; sequence RVAIIHVGAP…GRSSLYAIPN (371 aa). Residues 537–541, 582–584, Asp-640, and 672–675 each bind beta-D-fructose 2,6-bisphosphate; these read SMSNN, QGA, and HFQQ.

Belongs to the phosphofructokinase type A (PFKA) family. ATP-dependent PFK group I subfamily. Eukaryotic two domain clade 'E' sub-subfamily. As to quaternary structure, homotetramer. The cofactor is Mg(2+).

It is found in the cytoplasm. It catalyses the reaction beta-D-fructose 6-phosphate + ATP = beta-D-fructose 1,6-bisphosphate + ADP + H(+). It functions in the pathway carbohydrate degradation; glycolysis; D-glyceraldehyde 3-phosphate and glycerone phosphate from D-glucose: step 3/4. Its activity is regulated as follows. Allosterically activated by ADP, AMP, or fructose 2,6-bisphosphate, and allosterically inhibited by ATP or citrate. Catalyzes the phosphorylation of D-fructose 6-phosphate to fructose 1,6-bisphosphate by ATP, the first committing step of glycolysis. The protein is ATP-dependent 6-phosphofructokinase 2 (pfkB) of Aspergillus oryzae (strain ATCC 42149 / RIB 40) (Yellow koji mold).